A 128-amino-acid polypeptide reads, in one-letter code: Transmembrane protein 234 homolog (128 aa).

Helical transmembrane passes span 3-23 (TYNIISLLLVGFIWGGTNPLI), 53-73 (PSYTIPMLINLSGSVVFFYTL), 80-100 (LVVPISNSLTFLFTSLMGMLL), and 104-124 (VLHFKSYLGMIFVLAGVTICV).

The protein belongs to the TMEM234 family.

The protein resides in the membrane. In Dictyostelium discoideum (Social amoeba), this protein is Transmembrane protein 234 homolog.